The primary structure comprises 248 residues: UPF0246 protein lp_0089 (248 aa).

This sequence belongs to the UPF0246 family.

The chain is UPF0246 protein lp_0089 from Lactiplantibacillus plantarum (strain ATCC BAA-793 / NCIMB 8826 / WCFS1) (Lactobacillus plantarum).